The following is a 970-amino-acid chain: Protein translocase subunit SecA (970 aa).

Residues Q99, 117 to 121, and D631 contribute to the ATP site; that span reads GEGKT.

The protein belongs to the SecA family. Monomer and homodimer. Part of the essential Sec protein translocation apparatus which comprises SecA, SecYEG and auxiliary proteins SecDF. Other proteins may also be involved.

The protein localises to the cell inner membrane. It localises to the cytoplasm. It carries out the reaction ATP + H2O + cellular proteinSide 1 = ADP + phosphate + cellular proteinSide 2.. In terms of biological role, part of the Sec protein translocase complex. Interacts with the SecYEG preprotein conducting channel. Has a central role in coupling the hydrolysis of ATP to the transfer of proteins into and across the cell membrane, serving as an ATP-driven molecular motor driving the stepwise translocation of polypeptide chains across the membrane. The sequence is that of Protein translocase subunit SecA from Chlamydia pneumoniae (Chlamydophila pneumoniae).